The chain runs to 460 residues: tRNA modification GTPase MnmE (460 aa).

(6S)-5-formyl-5,6,7,8-tetrahydrofolate-binding residues include arginine 26, glutamate 88, and arginine 127. The region spanning 222 to 381 (GLKVAIVGRP…LESAILSKVQ (160 aa)) is the TrmE-type G domain. Asparagine 232 provides a ligand contact to K(+). Residues 232–237 (NVGKSS), 251–257 (TELPGTT), and 276–279 (DTAG) contribute to the GTP site. Serine 236 lines the Mg(2+) pocket. K(+)-binding residues include threonine 251, leucine 253, and threonine 256. Threonine 257 provides a ligand contact to Mg(2+). Residue lysine 460 participates in (6S)-5-formyl-5,6,7,8-tetrahydrofolate binding.

Belongs to the TRAFAC class TrmE-Era-EngA-EngB-Septin-like GTPase superfamily. TrmE GTPase family. In terms of assembly, homodimer. Heterotetramer of two MnmE and two MnmG subunits. The cofactor is K(+).

The protein resides in the cytoplasm. Its function is as follows. Exhibits a very high intrinsic GTPase hydrolysis rate. Involved in the addition of a carboxymethylaminomethyl (cmnm) group at the wobble position (U34) of certain tRNAs, forming tRNA-cmnm(5)s(2)U34. This chain is tRNA modification GTPase MnmE, found in Cyanothece sp. (strain PCC 7425 / ATCC 29141).